Consider the following 171-residue polypeptide: Large ribosomal subunit protein uL10 (171 aa).

The protein belongs to the universal ribosomal protein uL10 family. In terms of assembly, part of the ribosomal stalk of the 50S ribosomal subunit. The N-terminus interacts with L11 and the large rRNA to form the base of the stalk. The C-terminus forms an elongated spine to which L12 dimers bind in a sequential fashion forming a multimeric L10(L12)X complex.

In terms of biological role, forms part of the ribosomal stalk, playing a central role in the interaction of the ribosome with GTP-bound translation factors. The polypeptide is Large ribosomal subunit protein uL10 (Nitrosomonas europaea (strain ATCC 19718 / CIP 103999 / KCTC 2705 / NBRC 14298)).